We begin with the raw amino-acid sequence, 1374 residues long: MAPTSTYSYTERKRIRKSFGSRDSVLKVPYLLQMQKDAYTAFLQADMAPQKRTNEGLQAAFNAAFPIVSHNGFVEMKFVEYNLAKPAFDVRECQTRGLTFASAVRAKVQLIIYDRESSTSQSKVVKEVKEQEVYMGEVPLMTDKGSFIINGTERVIVSQLHRSPGVFFEHDKGKTHSSGKLLFSARIIPYRGSWLDFEFDPKDILYFRVDRRRKMPVTILLKAIGLNPESILANFFVNDNFRLMDSGAQMEFVADRLKGEVARFDITDKSGKVVVAKDKRITARHTRELEQSGTTHISVPEDFLIGRVVARNIVDGDTGEIVAKANEELTEALLKKLRSAGVQDLQVIYTNELDQGAYISQTLRIDETVDEFAARVAIYRMMRPGEPPTEDAVQALFQRLFYNPDTYDLSRVGRMKFNAKIGRDESTGPMVLSNDDILAVVKILVDLRNGKGEVDDIDHLGNRRVRCVGELAENQYRTGLARIEKAVKERLGQAEQEPLMPHDLINSKPISAALKEFFGASQLSQFMDQTNPLAEITHKRRVSALGPGGLTRERAGFEVRDVHVTHYGRVCPIETPEGPNIGLINSLALYARLNEYGFIETPYRRVVDGKVTDQIDYLSAIEEGKYVIAQANAALDAEGRLTGDLVSAREKGESTLLSAERVQYMDVSPAQIVSVAASLVPFLEHDDANRALMGANMSRQAVPVLRPEKPMVGTGIERVAAVDSGTVVTANRGGIVDYVDATRIVVRVNDDEAVAGEVGVDIYNLIKYQRSNQNTNIHQRPIVKKGDVLAKGDVIADGASTDLGEIAIGQNMLIAFMPWNGYNFEDSILISERVVAEDRYTSIHIEELVVMARDTKLGAEEITRDIPNLSEQQLNRLDESGIIYVGAEVQPGDTLVGKVTPKGETTLTPEEKLLRAIFGEKASDVKDTSLRVDQGSSGTVIDVQVFTREGIQRDKRAQQIIDDELKRFRLDLNDQLRIVEADAFDRIEKLLNGRVANGGPQKLAKGTKIDKAYLASVEKFHWFDIRPAEDEVATQLESIKNALEQTRHSFDLAFEEKRKKLTQGDELPAGVLKMVKVYLAVKRRLQPGDKMAGRHGNKGVVSKIVPVEDMPYMADGTPADIVLNPLGVPSRMNIGQVLEVHLGWAGKGIGQRIGDMLRDQAKAAEMRKFLEEVYNSRGRKEDLSVLSDDEVMAMAANLTNGVPYATPVFDGASEAEIKDMLKLAYPDDIKERKGLTESRTQAYLYDGRTGERFERPTTIGYMHYLKLHHLVDDKMHARSTGPYSLVTQQPLGGKAQFGGQRFGEMEVWALEAYGASYVLQEMLTVKSDDVQGRTKVYESIVKGEHAIEAGMPESFNVLVKEIRSLGLDIELERS.

It belongs to the RNA polymerase beta chain family. The RNAP catalytic core consists of 2 alpha, 1 beta, 1 beta' and 1 omega subunit. When a sigma factor is associated with the core the holoenzyme is formed, which can initiate transcription.

The catalysed reaction is RNA(n) + a ribonucleoside 5'-triphosphate = RNA(n+1) + diphosphate. In terms of biological role, DNA-dependent RNA polymerase catalyzes the transcription of DNA into RNA using the four ribonucleoside triphosphates as substrates. The polypeptide is DNA-directed RNA polymerase subunit beta (Paracidovorax citrulli (strain AAC00-1) (Acidovorax citrulli)).